We begin with the raw amino-acid sequence, 580 residues long: Arginine--tRNA ligase (580 aa).

Positions alanine 131–histidine 141 match the 'HIGH' region motif.

The protein belongs to the class-I aminoacyl-tRNA synthetase family. Monomer.

The protein resides in the cytoplasm. It catalyses the reaction tRNA(Arg) + L-arginine + ATP = L-arginyl-tRNA(Arg) + AMP + diphosphate. This Ruegeria sp. (strain TM1040) (Silicibacter sp.) protein is Arginine--tRNA ligase.